Here is a 265-residue protein sequence, read N- to C-terminus: Capsule polysaccharide export inner-membrane protein BexB (265 aa).

6 helical membrane-spanning segments follow: residues 37 to 57 (IGFL…VMMW), 64 to 84 (KFST…AMMW), 121 to 141 (VAGA…IGWI), 148 to 168 (FYML…GLII), 178 to 198 (FGKI…AFFF), and 235 to 255 (ESIG…LVMV). The ABC transmembrane type-2 domain occupies 37–258 (IGFLWLFVEP…LMGLVMVKNF (222 aa)).

The protein belongs to the ABC-2 integral membrane protein family.

The protein resides in the cell inner membrane. In terms of biological role, may form an ATP-driven capsule polysaccharide export apparatus, in association with the BexA, BexC and BexD proteins. The sequence is that of Capsule polysaccharide export inner-membrane protein BexB (bexB) from Haemophilus influenzae.